The following is a 196-amino-acid chain: Probable malonic semialdehyde reductase RutE (196 aa).

The protein belongs to the nitroreductase family. HadB/RutE subfamily. It depends on FMN as a cofactor.

It carries out the reaction 3-hydroxypropanoate + NADP(+) = 3-oxopropanoate + NADPH + H(+). In terms of biological role, may reduce toxic product malonic semialdehyde to 3-hydroxypropionic acid, which is excreted. In Klebsiella pneumoniae subsp. pneumoniae (strain ATCC 700721 / MGH 78578), this protein is Probable malonic semialdehyde reductase RutE.